The following is a 278-amino-acid chain: Tryptophan synthase alpha chain (278 aa).

Residues Glu50 and Asp61 each act as proton acceptor in the active site.

This sequence belongs to the TrpA family. In terms of assembly, tetramer of two alpha and two beta chains.

The catalysed reaction is (1S,2R)-1-C-(indol-3-yl)glycerol 3-phosphate + L-serine = D-glyceraldehyde 3-phosphate + L-tryptophan + H2O. Its pathway is amino-acid biosynthesis; L-tryptophan biosynthesis; L-tryptophan from chorismate: step 5/5. In terms of biological role, the alpha subunit is responsible for the aldol cleavage of indoleglycerol phosphate to indole and glyceraldehyde 3-phosphate. This is Tryptophan synthase alpha chain from Methylobacterium nodulans (strain LMG 21967 / CNCM I-2342 / ORS 2060).